The primary structure comprises 278 residues: 3-methyl-2-oxobutanoate hydroxymethyltransferase (278 aa).

Mg(2+)-binding residues include D52 and D91. Residues 52–53, D91, and K121 contribute to the 3-methyl-2-oxobutanoate site; that span reads DS. Residue E123 coordinates Mg(2+). E190 functions as the Proton acceptor in the catalytic mechanism.

The protein belongs to the PanB family. In terms of assembly, homodecamer; pentamer of dimers. The cofactor is Mg(2+).

It is found in the cytoplasm. The enzyme catalyses 3-methyl-2-oxobutanoate + (6R)-5,10-methylene-5,6,7,8-tetrahydrofolate + H2O = 2-dehydropantoate + (6S)-5,6,7,8-tetrahydrofolate. It functions in the pathway cofactor biosynthesis; (R)-pantothenate biosynthesis; (R)-pantoate from 3-methyl-2-oxobutanoate: step 1/2. Catalyzes the reversible reaction in which hydroxymethyl group from 5,10-methylenetetrahydrofolate is transferred onto alpha-ketoisovalerate to form ketopantoate. This is 3-methyl-2-oxobutanoate hydroxymethyltransferase from Rhodospirillum rubrum (strain ATCC 11170 / ATH 1.1.1 / DSM 467 / LMG 4362 / NCIMB 8255 / S1).